The chain runs to 49 residues: Large ribosomal subunit protein bL33A (49 aa).

It belongs to the bacterial ribosomal protein bL33 family.

This chain is Large ribosomal subunit protein bL33A, found in Leuconostoc mesenteroides subsp. mesenteroides (strain ATCC 8293 / DSM 20343 / BCRC 11652 / CCM 1803 / JCM 6124 / NCDO 523 / NBRC 100496 / NCIMB 8023 / NCTC 12954 / NRRL B-1118 / 37Y).